A 295-amino-acid polypeptide reads, in one-letter code: Diaminopimelate epimerase (295 aa).

Residues Asn-11 and Asn-78 each coordinate substrate. The Proton donor role is filled by Cys-87. Residues 88 to 89 (GN), Asn-163, Asn-199, and 220 to 221 (ER) contribute to the substrate site. The active-site Proton acceptor is Cys-229. 230 to 231 (GT) is a binding site for substrate.

Belongs to the diaminopimelate epimerase family. Homodimer.

Its subcellular location is the cytoplasm. The catalysed reaction is (2S,6S)-2,6-diaminopimelate = meso-2,6-diaminopimelate. It participates in amino-acid biosynthesis; L-lysine biosynthesis via DAP pathway; DL-2,6-diaminopimelate from LL-2,6-diaminopimelate: step 1/1. Functionally, catalyzes the stereoinversion of LL-2,6-diaminopimelate (L,L-DAP) to meso-diaminopimelate (meso-DAP), a precursor of L-lysine and an essential component of the bacterial peptidoglycan. This chain is Diaminopimelate epimerase, found in Mycobacteroides abscessus (strain ATCC 19977 / DSM 44196 / CCUG 20993 / CIP 104536 / JCM 13569 / NCTC 13031 / TMC 1543 / L948) (Mycobacterium abscessus).